The chain runs to 111 residues: Class I hydrophobin 2 (111 aa).

The first 21 residues, 1–21 (MFSRVMFCTFLILPLLAAATA), serve as a signal peptide directing secretion. 4 disulfides stabilise this stretch: Cys-30–Cys-90, Cys-37–Cys-84, Cys-38–Cys-71, and Cys-91–Cys-104.

This sequence belongs to the fungal hydrophobin family. Self-assembles to form functional amyloid fibrils called rodlets. Self-assembly into fibrillar rodlets occurs spontaneously at hydrophobic:hydrophilic interfaces and the rodlets further associate laterally to form amphipathic monolayers. Behavior depends on environmental conditions: (1) when the pH increases or in the presence of Ca(2+) ions, an assembled state, beta-sheet rich, is formed; (2) when the solvent polarity increases, the vhm2 shows an increased tendency to reach hydrophobic/hydrophilic interfaces, with no detectable conformational change; and (3) at high temperature, a reversible conformational change and reversible aggregation occur. The physical and chemical properties, both in solution and as a biofilm, are affected by polysaccharides that act as hydrophilic stabilizer.

Its subcellular location is the secreted. It is found in the cell wall. Its function is as follows. Aerial growth, conidiation, and dispersal of filamentous fungi in the environment rely upon a capability of their secreting small amphipathic proteins called hydrophobins (HPBs) with low sequence identity. Class I can self-assemble into an outermost layer of rodlet bundles on aerial cell surfaces, conferring cellular hydrophobicity that supports fungal growth, development and dispersal; whereas Class II form highly ordered films at water-air interfaces through intermolecular interactions but contribute nothing to the rodlet structure. Vmh2 is a class I hydrophobin involved in biofilm formation and is essential for the maintenance of the surface hydrophobicity of the mycelium. Seems not to be involved in hyphal resistance against environmental stress. The chain is Class I hydrophobin 2 from Pleurotus ostreatus (strain PC15) (Oyster mushroom).